The chain runs to 298 residues: Ethanolamine ammonia-lyase small subunit (298 aa).

Positions 17–37 (MGQDVPQPVAPSKQEGAKPQC) are disordered. The adenosylcob(III)alamin site is built by Val-210, Glu-231, and Cys-261.

This sequence belongs to the EutC family. As to quaternary structure, the basic unit is a heterodimer which dimerizes to form tetramers. The heterotetramers trimerize; 6 large subunits form a core ring with 6 small subunits projecting outwards. Requires adenosylcob(III)alamin as cofactor.

The protein resides in the bacterial microcompartment. It carries out the reaction ethanolamine = acetaldehyde + NH4(+). It functions in the pathway amine and polyamine degradation; ethanolamine degradation. Functionally, catalyzes the deamination of various vicinal amino-alcohols to oxo compounds. Allows this organism to utilize ethanolamine as the sole source of nitrogen and carbon in the presence of external vitamin B12. This is Ethanolamine ammonia-lyase small subunit from Salmonella paratyphi A (strain ATCC 9150 / SARB42).